A 107-amino-acid polypeptide reads, in one-letter code: Large ribosomal subunit protein P1 (107 aa).

Positions 67-82 are enriched in low complexity; that stretch reads PTATSAAAAPAAGEAS. The tract at residues 67–107 is disordered; that stretch reads PTATSAAAAPAAGEASGKAEEKKKEEPEEEGDDDMGFGLFD. Over residues 83–92 the composition is skewed to basic and acidic residues; the sequence is GKAEEKKKEE.

The protein belongs to the eukaryotic ribosomal protein P1/P2 family. In terms of assembly, P1 and P2 exist as dimers at the large ribosomal subunit.

Functionally, plays an important role in the elongation step of protein synthesis. In Leishmania peruviana, this protein is Large ribosomal subunit protein P1.